We begin with the raw amino-acid sequence, 284 residues long: Tropomyosin (284 aa).

The stretch at 1–273 (MDAIKKKMVA…KEKYKAISDE (273 aa)) forms a coiled coil. Residues 110–130 (SGKLEEASKAADESERNRKVL) show a composition bias toward basic and acidic residues. The disordered stretch occupies residues 110–134 (SGKLEEASKAADESERNRKVLENLN).

Belongs to the tropomyosin family. As to quaternary structure, homodimer.

In terms of biological role, tropomyosin, in association with the troponin complex, plays a central role in the calcium dependent regulation of muscle contraction. This is Tropomyosin from Perna viridis (Asian green mussel).